A 200-amino-acid chain; its full sequence is Large ribosomal subunit protein uL4 (200 aa).

The interval 38–65 (GRQGSKAQKTRSEVSGGGKKPWRQKGTG) is disordered.

The protein belongs to the universal ribosomal protein uL4 family. Part of the 50S ribosomal subunit.

One of the primary rRNA binding proteins, this protein initially binds near the 5'-end of the 23S rRNA. It is important during the early stages of 50S assembly. It makes multiple contacts with different domains of the 23S rRNA in the assembled 50S subunit and ribosome. Functionally, forms part of the polypeptide exit tunnel. The polypeptide is Large ribosomal subunit protein uL4 (Pseudomonas aeruginosa (strain LESB58)).